We begin with the raw amino-acid sequence, 342 residues long: Galactose mutarotase (342 aa).

Phosphoserine is present on S14. Beta-D-galactose-binding positions include N81 to R82, H107, H176 to Y178, D243, Q279, and E307. Catalysis depends on H176, which acts as the Proton donor. Residue E307 is the Proton acceptor of the active site.

This sequence belongs to the aldose epimerase family. In terms of assembly, monomer.

Its subcellular location is the cytoplasm. The enzyme catalyses alpha-D-galactose = beta-D-galactose. It carries out the reaction alpha-D-glucose = beta-D-glucose. It participates in carbohydrate metabolism; hexose metabolism. Its pathway is carbohydrate metabolism; galactose metabolism. Its function is as follows. Mutarotase that catalyzes the interconversion of beta-D-galactose and alpha-D-galactose during galactose metabolism. Beta-D-galactose is metabolized in the liver into glucose 1-phosphate, the primary metabolic fuel, by the action of four enzymes that constitute the Leloir pathway: GALM, GALK1 (galactokinase), GALT (galactose-1-phosphate uridylyltransferase) and GALE (UDP-galactose-4'-epimerase). Involved in the maintenance of the equilibrium between the beta- and alpha-anomers of galactose, therefore ensuring a sufficient supply of the alpha-anomer for GALK1. Also active on D-glucose although shows a preference for galactose over glucose. This chain is Galactose mutarotase, found in Mus musculus (Mouse).